Reading from the N-terminus, the 243-residue chain is Small ribosomal subunit protein uS3 (243 aa).

The KH type-2 domain maps to 39–110; the sequence is IRTFIQKKYG…QVRINVVEVE (72 aa). Residues 216–243 form a disordered region; the sequence is KTIPVGASPKRKAGRRPQQFEDRSNENS. The span at 233 to 243 shows a compositional bias: basic and acidic residues; sequence QQFEDRSNENS.

Belongs to the universal ribosomal protein uS3 family. Part of the 30S ribosomal subunit. Forms a tight complex with proteins S10 and S14.

Functionally, binds the lower part of the 30S subunit head. Binds mRNA in the 70S ribosome, positioning it for translation. The sequence is that of Small ribosomal subunit protein uS3 from Prochlorococcus marinus (strain MIT 9312).